The sequence spans 958 residues: Glycine dehydrogenase (decarboxylating) (958 aa).

Residue K705 is modified to N6-(pyridoxal phosphate)lysine.

It belongs to the GcvP family. In terms of assembly, the glycine cleavage system is composed of four proteins: P, T, L and H. Pyridoxal 5'-phosphate is required as a cofactor.

It catalyses the reaction N(6)-[(R)-lipoyl]-L-lysyl-[glycine-cleavage complex H protein] + glycine + H(+) = N(6)-[(R)-S(8)-aminomethyldihydrolipoyl]-L-lysyl-[glycine-cleavage complex H protein] + CO2. Functionally, the glycine cleavage system catalyzes the degradation of glycine. The P protein binds the alpha-amino group of glycine through its pyridoxal phosphate cofactor; CO(2) is released and the remaining methylamine moiety is then transferred to the lipoamide cofactor of the H protein. This chain is Glycine dehydrogenase (decarboxylating), found in Bdellovibrio bacteriovorus (strain ATCC 15356 / DSM 50701 / NCIMB 9529 / HD100).